The chain runs to 83 residues: Protein midgut expression 1 (83 aa).

As to expression, endoderm-specific pattern of expression during embryogenesis; anterior and posterior midgut primordia.

In terms of biological role, involved in morphogenesis and development. This Drosophila melanogaster (Fruit fly) protein is Protein midgut expression 1 (mex1).